The sequence spans 317 residues: tRNA dimethylallyltransferase (317 aa).

21 to 28 (GPTASGKS) is an ATP binding site. 23 to 28 (TASGKS) provides a ligand contact to substrate. Residues 46–49 (DSMQ) form an interaction with substrate tRNA region.

This sequence belongs to the IPP transferase family. In terms of assembly, monomer. The cofactor is Mg(2+).

It catalyses the reaction adenosine(37) in tRNA + dimethylallyl diphosphate = N(6)-dimethylallyladenosine(37) in tRNA + diphosphate. Its function is as follows. Catalyzes the transfer of a dimethylallyl group onto the adenine at position 37 in tRNAs that read codons beginning with uridine, leading to the formation of N6-(dimethylallyl)adenosine (i(6)A). This chain is tRNA dimethylallyltransferase, found in Nitrobacter hamburgensis (strain DSM 10229 / NCIMB 13809 / X14).